Reading from the N-terminus, the 205-residue chain is Transcriptional regulator GfcR (205 aa).

It belongs to the purine/pyrimidine phosphoribosyltransferase family. GfcR subfamily.

This Methanococcus maripaludis (strain C7 / ATCC BAA-1331) protein is Transcriptional regulator GfcR.